Here is a 149-residue protein sequence, read N- to C-terminus: Putative glycine cleavage system H protein 3 (149 aa).

The Lipoyl-binding domain occupies 39–121 (TCTLGITKYA…EDKGWLIKME (83 aa)). The residue at position 80 (K80) is an N6-lipoyllysine.

Belongs to the GcvH family. As to quaternary structure, the glycine cleavage system is composed of four proteins: P, T, L and H. The cofactor is (R)-lipoate.

Functionally, the glycine cleavage system catalyzes the degradation of glycine. The H protein shuttles the methylamine group of glycine from the P protein to the T protein. The protein is Putative glycine cleavage system H protein 3 (gcvH3) of Dictyostelium discoideum (Social amoeba).